The sequence spans 234 residues: Small ribosomal subunit protein eS4 (234 aa).

In terms of domain architecture, S4 RNA-binding; degenerate spans 38-99 (IPLLIALRDY…GNDYLVSYDR (62 aa)).

The protein belongs to the eukaryotic ribosomal protein eS4 family.

The protein is Small ribosomal subunit protein eS4 (rps4e) of Picrophilus torridus (strain ATCC 700027 / DSM 9790 / JCM 10055 / NBRC 100828 / KAW 2/3).